Here is a 174-residue protein sequence, read N- to C-terminus: Recombination protein RecR (174 aa).

The segment at 30–45 (CNACRTFTEEEECTIC) adopts a C4-type zinc-finger fold. A Toprim domain is found at 54–149 (GQLCIVEMPE…KVTRIAHGIP (96 aa)).

This sequence belongs to the RecR family.

In terms of biological role, may play a role in DNA repair. It seems to be involved in an RecBC-independent recombinational process of DNA repair. It may act with RecF and RecO. In Haemophilus ducreyi (strain 35000HP / ATCC 700724), this protein is Recombination protein RecR.